The primary structure comprises 180 residues: UPF0227 protein YcfP (180 aa).

Belongs to the UPF0227 family.

This Escherichia coli O7:K1 (strain IAI39 / ExPEC) protein is UPF0227 protein YcfP.